Reading from the N-terminus, the 157-residue chain is NADPH-dependent 7-cyano-7-deazaguanine reductase (157 aa).

C55 (thioimide intermediate) is an active-site residue. The Proton donor role is filled by D62. Substrate-binding positions include 77 to 79 and 96 to 97; these read VES and HE.

It belongs to the GTP cyclohydrolase I family. QueF type 1 subfamily.

The protein resides in the cytoplasm. It carries out the reaction 7-aminomethyl-7-carbaguanine + 2 NADP(+) = 7-cyano-7-deazaguanine + 2 NADPH + 3 H(+). It functions in the pathway tRNA modification; tRNA-queuosine biosynthesis. Functionally, catalyzes the NADPH-dependent reduction of 7-cyano-7-deazaguanine (preQ0) to 7-aminomethyl-7-deazaguanine (preQ1). The sequence is that of NADPH-dependent 7-cyano-7-deazaguanine reductase from Neisseria gonorrhoeae (strain ATCC 700825 / FA 1090).